The primary structure comprises 356 residues: Chorismate synthase (356 aa).

R44 contacts NADP(+). Residues 121–123 (HFS), G278, 293–297 (KPTPS), and R320 contribute to the FMN site.

This sequence belongs to the chorismate synthase family. FMNH2 serves as cofactor.

The catalysed reaction is 5-O-(1-carboxyvinyl)-3-phosphoshikimate = chorismate + phosphate. It functions in the pathway metabolic intermediate biosynthesis; chorismate biosynthesis; chorismate from D-erythrose 4-phosphate and phosphoenolpyruvate: step 7/7. In terms of biological role, catalyzes the anti-1,4-elimination of the C-3 phosphate and the C-6 proR hydrogen from 5-enolpyruvylshikimate-3-phosphate (EPSP) to yield chorismate, which is the branch point compound that serves as the starting substrate for the three terminal pathways of aromatic amino acid biosynthesis. This reaction introduces a second double bond into the aromatic ring system. The sequence is that of Chorismate synthase from Pyrococcus abyssi (strain GE5 / Orsay).